Consider the following 409-residue polypeptide: 8-amino-7-oxononanoate synthase (409 aa).

Arginine 20 contributes to the substrate binding site. 116-117 (GY) lines the pyridoxal 5'-phosphate pocket. Residue histidine 141 participates in substrate binding. Pyridoxal 5'-phosphate-binding residues include serine 187, histidine 215, and threonine 243. Lysine 246 carries the post-translational modification N6-(pyridoxal phosphate)lysine. Threonine 369 contacts substrate.

It belongs to the class-II pyridoxal-phosphate-dependent aminotransferase family. BioF subfamily. As to quaternary structure, homodimer. Requires pyridoxal 5'-phosphate as cofactor.

It carries out the reaction 6-carboxyhexanoyl-[ACP] + L-alanine + H(+) = (8S)-8-amino-7-oxononanoate + holo-[ACP] + CO2. The protein operates within cofactor biosynthesis; biotin biosynthesis. In terms of biological role, catalyzes the decarboxylative condensation of pimeloyl-[acyl-carrier protein] and L-alanine to produce 8-amino-7-oxononanoate (AON), [acyl-carrier protein], and carbon dioxide. The chain is 8-amino-7-oxononanoate synthase from Polaromonas naphthalenivorans (strain CJ2).